A 687-amino-acid polypeptide reads, in one-letter code: Fatty acid oxidation complex subunit alpha (687 aa).

An enoyl-CoA hydratase region spans residues 1–191; the sequence is MKNTSAFAWT…KLGVVDASVP (191 aa). Residues 307-687 are 3-hydroxyacyl-CoA dehydrogenase; sequence KSIDYVGVLG…ADKYGDRFIE (381 aa).

The protein in the N-terminal section; belongs to the enoyl-CoA hydratase/isomerase family. In the central section; belongs to the 3-hydroxyacyl-CoA dehydrogenase family. Heterotetramer of two alpha chains (FadJ) and two beta chains (FadI).

It localises to the cytoplasm. The catalysed reaction is a (3S)-3-hydroxyacyl-CoA = a (2E)-enoyl-CoA + H2O. It carries out the reaction a 4-saturated-(3S)-3-hydroxyacyl-CoA = a (3E)-enoyl-CoA + H2O. The enzyme catalyses a (3S)-3-hydroxyacyl-CoA + NAD(+) = a 3-oxoacyl-CoA + NADH + H(+). It catalyses the reaction (3S)-3-hydroxybutanoyl-CoA = (3R)-3-hydroxybutanoyl-CoA. The protein operates within lipid metabolism; fatty acid beta-oxidation. Catalyzes the formation of a hydroxyacyl-CoA by addition of water on enoyl-CoA. Also exhibits 3-hydroxyacyl-CoA epimerase and 3-hydroxyacyl-CoA dehydrogenase activities. The chain is Fatty acid oxidation complex subunit alpha from Aliivibrio fischeri (strain ATCC 700601 / ES114) (Vibrio fischeri).